The following is a 77-amino-acid chain: MKATVNIQDQFLNQLRKESIPVTVFLLNGFQLRGQVKGFDNFTVIVETEGRQQLVYKHAISTFAPQKNVQLKNEAEV.

In terms of domain architecture, Sm spans 9–69; the sequence is DQFLNQLRKE…ISTFAPQKNV (61 aa).

Belongs to the Hfq family. As to quaternary structure, homohexamer.

In terms of biological role, RNA chaperone that binds small regulatory RNA (sRNAs) and mRNAs to facilitate mRNA translational regulation in response to envelope stress, environmental stress and changes in metabolite concentrations. Also binds with high specificity to tRNAs. The protein is RNA-binding protein Hfq of Shouchella clausii (strain KSM-K16) (Alkalihalobacillus clausii).